The primary structure comprises 295 residues: Xyloglucan endotransglucosylase protein 2 (295 aa).

The first 23 residues, 1–23, serve as a signal peptide directing secretion; that stretch reads MAMGTHFGGLWLALLCMVSATMG. Residues 24–222 enclose the GH16 domain; sequence AVPRKPVDVP…WSKAPFVASY (199 aa). Glutamate 108 acts as the Nucleophile in catalysis. Catalysis depends on glutamate 112, which acts as the Proton donor. Position 112 (glutamate 112) interacts with xyloglucan. Asparagine 116 carries an N-linked (GlcNAc...) asparagine glycan. Xyloglucan-binding positions include 125-127, 135-137, 201-202, and glycine 206; these read QTN, DRE, and DW. Intrachain disulfides connect cysteine 230–cysteine 239 and cysteine 276–cysteine 289. Arginine 281 lines the xyloglucan pocket.

This sequence belongs to the glycosyl hydrolase 16 family. XTH group 1 subfamily. In terms of processing, contains at least one intrachain disulfide bond essential for its enzymatic activity. In terms of tissue distribution, expressed in fruit pulp.

The protein resides in the secreted. The protein localises to the cell wall. It localises to the extracellular space. It is found in the apoplast. It catalyses the reaction breaks a beta-(1-&gt;4) bond in the backbone of a xyloglucan and transfers the xyloglucanyl segment on to O-4 of the non-reducing terminal glucose residue of an acceptor, which can be a xyloglucan or an oligosaccharide of xyloglucan.. In terms of biological role, catalyzes xyloglucan endotransglycosylation (XET). Cleaves and religates xyloglucan polymers. Does not catalyze xyloglucan endohydrolysis (XEH). Probably involved in cell wall restructuring during fruit ripening and postharvest fruit softening. In Diospyros kaki (Kaki persimmon), this protein is Xyloglucan endotransglucosylase protein 2.